Reading from the N-terminus, the 1229-residue chain is uncharacterized protein (1229 aa).

The N-terminal stretch at 1 to 19 (MKYFLLLFLLVLSFTLVES) is a signal peptide. 6 N-linked (GlcNAc...) asparagine glycosylation sites follow: asparagine 238, asparagine 270, asparagine 370, asparagine 538, asparagine 691, and asparagine 701. The Galectin 1 domain occupies 678–813 (RMVNFANVME…QWNIDTVKMN (136 aa)). Positions 818–829 (HTTTVEPSTPLE) are enriched in polar residues. Residues 818–903 (HTTTVEPSTP…TLPPTTTPYN (86 aa)) form a disordered region. Over residues 830 to 846 (TASTSQSTPSATLTSTT) the composition is skewed to low complexity. Residues 847 to 869 (ENIPSTSKIPETSTTQRPTSPIL) are compositionally biased toward polar residues. A compositionally biased stretch (low complexity) spans 870–901 (TSGATSTSSSTESTTTSPTTSTTTTLPPTTTP). N-linked (GlcNAc...) asparagine glycosylation is found at asparagine 903, asparagine 938, and asparagine 948. A Galectin 2 domain is found at 925–1059 (RPVVFSRYME…ESTIDTVSMA (135 aa)). The segment at 1061-1087 (VRPPTTPTTTTSTTTTTTPKLTTTSTL) is disordered. Positions 1067–1087 (PTTTTSTTTTTTPKLTTTSTL) are enriched in low complexity. N-linked (GlcNAc...) asparagine glycosylation occurs at asparagine 1146.

This is an uncharacterized protein from Caenorhabditis elegans.